Here is a 327-residue protein sequence, read N- to C-terminus: uncharacterized protein (327 aa).

A disordered region spans residues 12-31 (PLGTTKSYHMNTSTVSPPSP). The next 2 helical transmembrane spans lie at 183–203 (VSSP…PVIL) and 292–312 (VGVG…GLLM).

The protein localises to the membrane. This is an uncharacterized protein from Arabidopsis thaliana (Mouse-ear cress).